The following is a 111-amino-acid chain: Aquaporin-2 (111 aa).

The Cytoplasmic portion of the chain corresponds to 1-6 (SIAFSR). Residues 7–27 (AVFSEFLATLLFVFFGLGSAL) form a helical membrane-spanning segment. The Extracellular portion of the chain corresponds to 28 to 37 (NWPSTVPIPT). A helical membrane pass occupies residues 38-56 (VLQISMAFGLAIGTLVQTL). The Cytoplasmic segment spans residues 57-61 (GHISG). An intramembrane region (discontinuously helical) is located at residues 62-71 (AHINPAVTVA). The NPA 1 signature appears at 65 to 67 (NPA). The Cytoplasmic portion of the chain corresponds to 72 to 82 (CLVGCHVSFLR). The helical transmembrane segment at 83-104 (ATFYVAAQLLGAVAGAALLHKL) threads the bilayer. Topologically, residues 105–111 (TPEDIRG) are extracellular.

It belongs to the MIP/aquaporin (TC 1.A.8) family. In terms of assembly, homotetramer. Serine phosphorylation is necessary and sufficient for expression at the apical membrane. Endocytosis is not phosphorylation-dependent. In terms of processing, N-glycosylated.

It localises to the apical cell membrane. The protein resides in the basolateral cell membrane. Its subcellular location is the cell membrane. The protein localises to the cytoplasmic vesicle membrane. It is found in the golgi apparatus. It localises to the trans-Golgi network membrane. The enzyme catalyses H2O(in) = H2O(out). It carries out the reaction glycerol(in) = glycerol(out). In terms of biological role, forms a water-specific channel that provides the plasma membranes of renal collecting duct with high permeability to water, thereby permitting water to move in the direction of an osmotic gradient. Plays an essential role in renal water homeostasis. Could also be permeable to glycerol. The polypeptide is Aquaporin-2 (Macroscelides proboscideus (Short-eared elephant shrew)).